Reading from the N-terminus, the 397-residue chain is Acetylornithine aminotransferase (397 aa).

F129 serves as a coordination point for pyridoxal 5'-phosphate. R132 contributes to the N(2)-acetyl-L-ornithine binding site. 214–217 is a binding site for pyridoxal 5'-phosphate; the sequence is DEVQ. K243 is subject to N6-(pyridoxal phosphate)lysine. S271 contacts N(2)-acetyl-L-ornithine. T272 is a pyridoxal 5'-phosphate binding site.

Belongs to the class-III pyridoxal-phosphate-dependent aminotransferase family. ArgD subfamily. Homodimer. Pyridoxal 5'-phosphate serves as cofactor.

The protein resides in the cytoplasm. It catalyses the reaction N(2)-acetyl-L-ornithine + 2-oxoglutarate = N-acetyl-L-glutamate 5-semialdehyde + L-glutamate. The protein operates within amino-acid biosynthesis; L-arginine biosynthesis; N(2)-acetyl-L-ornithine from L-glutamate: step 4/4. This is Acetylornithine aminotransferase from Neisseria meningitidis serogroup A / serotype 4A (strain DSM 15465 / Z2491).